We begin with the raw amino-acid sequence, 308 residues long: tRNA uridine(34) hydroxylase (308 aa).

The 95-residue stretch at 129–223 folds into the Rhodanese domain; sequence QEKDVLILDA…YGKHPETQGV (95 aa). The Cysteine persulfide intermediate role is filled by C183.

This sequence belongs to the TrhO family.

It catalyses the reaction uridine(34) in tRNA + AH2 + O2 = 5-hydroxyuridine(34) in tRNA + A + H2O. Catalyzes oxygen-dependent 5-hydroxyuridine (ho5U) modification at position 34 in tRNAs. In Aster yellows witches'-broom phytoplasma (strain AYWB), this protein is tRNA uridine(34) hydroxylase.